A 365-amino-acid chain; its full sequence is 3-dehydroquinate synthase (365 aa).

NAD(+) is bound by residues 106-110, 130-131, Lys142, Lys151, and 169-172; these read GVIGD, TT, and FFAT. Residues Glu184, His247, and His264 each contribute to the Zn(2+) site.

This sequence belongs to the sugar phosphate cyclases superfamily. Dehydroquinate synthase family. Co(2+) is required as a cofactor. It depends on Zn(2+) as a cofactor. The cofactor is NAD(+).

It is found in the cytoplasm. The enzyme catalyses 7-phospho-2-dehydro-3-deoxy-D-arabino-heptonate = 3-dehydroquinate + phosphate. Its pathway is metabolic intermediate biosynthesis; chorismate biosynthesis; chorismate from D-erythrose 4-phosphate and phosphoenolpyruvate: step 2/7. Functionally, catalyzes the conversion of 3-deoxy-D-arabino-heptulosonate 7-phosphate (DAHP) to dehydroquinate (DHQ). This Listeria monocytogenes serotype 4b (strain CLIP80459) protein is 3-dehydroquinate synthase.